The following is a 247-amino-acid chain: Cell division protein ZapD (247 aa).

The protein belongs to the ZapD family. As to quaternary structure, interacts with FtsZ.

The protein resides in the cytoplasm. Functionally, cell division factor that enhances FtsZ-ring assembly. Directly interacts with FtsZ and promotes bundling of FtsZ protofilaments, with a reduction in FtsZ GTPase activity. The protein is Cell division protein ZapD of Shigella dysenteriae serotype 1 (strain Sd197).